Consider the following 577-residue polypeptide: External alternative NAD(P)H-ubiquinone oxidoreductase B1, mitochondrial (577 aa).

The N-terminal 35 residues, 1-35 (MRGFTYLSKVLHSHSSYSKLLVLCSVSTGGLLVYA), are a transit peptide targeting the mitochondrion. FAD is bound at residue 57–87 (RVVVLGTGWGGTSFLKDVDISSYDVQVVSPR). 221–257 (LHFVIVGGGPTGVEFAAELHDYVYEDLVKIYPSVKDF) contacts NAD(+). The region spanning 378 to 413 (KVMEDISAIFKAADKDDSGTLSIEEFRDVLEDIIIR) is the EF-hand domain. Asp-391, Asp-393, Ser-395, Thr-397, and Glu-402 together coordinate Ca(2+). Positions 568 to 577 (YIFGRDSSRI) match the Microbody targeting signal motif.

The protein belongs to the NADH dehydrogenase family. FAD serves as cofactor.

The protein localises to the mitochondrion inner membrane. It is found in the peroxisome. It catalyses the reaction a quinone + NADH + H(+) = a quinol + NAD(+). It carries out the reaction a ubiquinone + NADH + H(+) = a ubiquinol + NAD(+). With respect to regulation, activity is calcium-dependent with a more pronounced effect at higher pH. Functionally, alternative NADH-ubiquinone oxidoreductase which catalyzes the oxidation of mitochondrial NADH does not translocate protons across the inner mitochondrial membrane. Calcium-dependent NAD(P)H dehydrogenase. Binds calcium ions. This Solanum tuberosum (Potato) protein is External alternative NAD(P)H-ubiquinone oxidoreductase B1, mitochondrial (NDB1).